Reading from the N-terminus, the 128-residue chain is UPF0325 protein YaeH (128 aa).

This sequence belongs to the UPF0325 family.

The chain is UPF0325 protein YaeH from Escherichia fergusonii (strain ATCC 35469 / DSM 13698 / CCUG 18766 / IAM 14443 / JCM 21226 / LMG 7866 / NBRC 102419 / NCTC 12128 / CDC 0568-73).